Consider the following 957-residue polypeptide: Leucine--tRNA ligase (957 aa).

A 'HIGH' region motif is present at residues 66-77 (PYPSGAGLHVGH). Positions 728–732 (KMGKS) match the 'KMSKS' region motif. K731 serves as a coordination point for ATP.

This sequence belongs to the class-I aminoacyl-tRNA synthetase family.

The protein resides in the cytoplasm. The catalysed reaction is tRNA(Leu) + L-leucine + ATP = L-leucyl-tRNA(Leu) + AMP + diphosphate. The chain is Leucine--tRNA ligase from Streptomyces griseus subsp. griseus (strain JCM 4626 / CBS 651.72 / NBRC 13350 / KCC S-0626 / ISP 5235).